The chain runs to 412 residues: Multifunctional CCA protein (412 aa).

2 residues coordinate ATP: Gly-8 and Arg-11. 2 residues coordinate CTP: Gly-8 and Arg-11. Residues Asp-21 and Asp-23 each contribute to the Mg(2+) site. ATP is bound by residues Arg-91, Arg-137, and Arg-140. 3 residues coordinate CTP: Arg-91, Arg-137, and Arg-140. In terms of domain architecture, HD spans 228-329 (TGIHTLMTLS…VKLFDSIDAW (102 aa)).

It belongs to the tRNA nucleotidyltransferase/poly(A) polymerase family. Bacterial CCA-adding enzyme type 1 subfamily. Monomer. Can also form homodimers and oligomers. Mg(2+) serves as cofactor. Ni(2+) is required as a cofactor.

The catalysed reaction is a tRNA precursor + 2 CTP + ATP = a tRNA with a 3' CCA end + 3 diphosphate. It carries out the reaction a tRNA with a 3' CCA end + 2 CTP + ATP = a tRNA with a 3' CCACCA end + 3 diphosphate. Functionally, catalyzes the addition and repair of the essential 3'-terminal CCA sequence in tRNAs without using a nucleic acid template. Adds these three nucleotides in the order of C, C, and A to the tRNA nucleotide-73, using CTP and ATP as substrates and producing inorganic pyrophosphate. tRNA 3'-terminal CCA addition is required both for tRNA processing and repair. Also involved in tRNA surveillance by mediating tandem CCA addition to generate a CCACCA at the 3' terminus of unstable tRNAs. While stable tRNAs receive only 3'-terminal CCA, unstable tRNAs are marked with CCACCA and rapidly degraded. The chain is Multifunctional CCA protein from Escherichia coli O139:H28 (strain E24377A / ETEC).